A 427-amino-acid polypeptide reads, in one-letter code: MINLTPWLNAPTWYVAFSGGLDSTVLLHLLAEYARNHASPPLRAIHIHHGLQAAADAWPAHCQAICDNFDVELQVIHVQVSPGASLEQAARDARYAAFRQVLGPGDILFTGQHRDDQAETLLFRLLRGAGLRGLAAMPGQRALGQGSLVRPLLACSRQHLQEYAQAQGLTWIEDPSNVDTQFARNYLRGEVMPHLQQRWPQASQNFARAAEHLGEALGLLDELAQEDLALAGKGAPLAWPGLDSLDLAALLALSPARQRNALQYWLSQRTRLPDTRHWAGWADLRDAGADARPVWRLADGRLVRSHGRIWWLSGDWLQQPAGSLAWPDPDGPLRLPGNGCVRLVGAAVPSGLRIAYRQGGEMLEVPGRGRRDLKRLLNEQQVPHFLRSRLPLLYHGECLLAVANLPGLVQADCQLHWQLPTNAQGLS.

18 to 23 provides a ligand contact to ATP; that stretch reads SGGLDS.

This sequence belongs to the tRNA(Ile)-lysidine synthase family.

It localises to the cytoplasm. The catalysed reaction is cytidine(34) in tRNA(Ile2) + L-lysine + ATP = lysidine(34) in tRNA(Ile2) + AMP + diphosphate + H(+). Its function is as follows. Ligates lysine onto the cytidine present at position 34 of the AUA codon-specific tRNA(Ile) that contains the anticodon CAU, in an ATP-dependent manner. Cytidine is converted to lysidine, thus changing the amino acid specificity of the tRNA from methionine to isoleucine. This is tRNA(Ile)-lysidine synthase from Pseudomonas putida (strain ATCC 47054 / DSM 6125 / CFBP 8728 / NCIMB 11950 / KT2440).